The primary structure comprises 442 residues: 5-methylthioadenosine/S-adenosylhomocysteine deaminase (442 aa).

Zn(2+) is bound by residues H70 and H72. Residues E99 and H191 each contribute to the substrate site. Residue H218 participates in Zn(2+) binding. Residues E221 and D306 each coordinate substrate. Zn(2+) is bound at residue D306.

The protein belongs to the metallo-dependent hydrolases superfamily. MTA/SAH deaminase family. The cofactor is Zn(2+).

It carries out the reaction S-adenosyl-L-homocysteine + H2O + H(+) = S-inosyl-L-homocysteine + NH4(+). The enzyme catalyses S-methyl-5'-thioadenosine + H2O + H(+) = S-methyl-5'-thioinosine + NH4(+). Catalyzes the deamination of 5-methylthioadenosine and S-adenosyl-L-homocysteine into 5-methylthioinosine and S-inosyl-L-homocysteine, respectively. Is also able to deaminate adenosine. The chain is 5-methylthioadenosine/S-adenosylhomocysteine deaminase from Nitratidesulfovibrio vulgaris (strain DP4) (Desulfovibrio vulgaris).